The primary structure comprises 227 residues: ATP-dependent dethiobiotin synthetase BioD (227 aa).

13 to 18 (DIGKTY) contributes to the ATP binding site. T17 provides a ligand contact to Mg(2+). The active site involves K38. Residue S42 coordinates substrate. Residues D55, 116 to 119 (EGSG), and 179 to 180 (NN) contribute to the ATP site. Mg(2+)-binding residues include D55 and E116.

It belongs to the dethiobiotin synthetase family. In terms of assembly, homodimer. The cofactor is Mg(2+).

It is found in the cytoplasm. The catalysed reaction is (7R,8S)-7,8-diammoniononanoate + CO2 + ATP = (4R,5S)-dethiobiotin + ADP + phosphate + 3 H(+). It functions in the pathway cofactor biosynthesis; biotin biosynthesis; biotin from 7,8-diaminononanoate: step 1/2. Catalyzes a mechanistically unusual reaction, the ATP-dependent insertion of CO2 between the N7 and N8 nitrogen atoms of 7,8-diaminopelargonic acid (DAPA, also called 7,8-diammoniononanoate) to form a ureido ring. This chain is ATP-dependent dethiobiotin synthetase BioD, found in Clostridium botulinum (strain Langeland / NCTC 10281 / Type F).